Reading from the N-terminus, the 338-residue chain is Ketol-acid reductoisomerase (NADP(+)) (338 aa).

Residues 1 to 181 (MKVFYDKDAD…GGGRAGIIET (181 aa)) enclose the KARI N-terminal Rossmann domain. NADP(+) contacts are provided by residues 24–27 (YGSQ), arginine 47, and serine 52. Histidine 107 is a catalytic residue. Glycine 133 contacts NADP(+). One can recognise a KARI C-terminal knotted domain in the interval 182–327 (NFREETETDL…EKLRAMMPWI (146 aa)). 4 residues coordinate Mg(2+): aspartate 190, glutamate 194, glutamate 226, and glutamate 230. Serine 251 is a substrate binding site.

It belongs to the ketol-acid reductoisomerase family. Requires Mg(2+) as cofactor.

The enzyme catalyses (2R)-2,3-dihydroxy-3-methylbutanoate + NADP(+) = (2S)-2-acetolactate + NADPH + H(+). The catalysed reaction is (2R,3R)-2,3-dihydroxy-3-methylpentanoate + NADP(+) = (S)-2-ethyl-2-hydroxy-3-oxobutanoate + NADPH + H(+). Its pathway is amino-acid biosynthesis; L-isoleucine biosynthesis; L-isoleucine from 2-oxobutanoate: step 2/4. It functions in the pathway amino-acid biosynthesis; L-valine biosynthesis; L-valine from pyruvate: step 2/4. In terms of biological role, involved in the biosynthesis of branched-chain amino acids (BCAA). Catalyzes an alkyl-migration followed by a ketol-acid reduction of (S)-2-acetolactate (S2AL) to yield (R)-2,3-dihydroxy-isovalerate. In the isomerase reaction, S2AL is rearranged via a Mg-dependent methyl migration to produce 3-hydroxy-3-methyl-2-ketobutyrate (HMKB). In the reductase reaction, this 2-ketoacid undergoes a metal-dependent reduction by NADPH to yield (R)-2,3-dihydroxy-isovalerate. This Cupriavidus taiwanensis (strain DSM 17343 / BCRC 17206 / CCUG 44338 / CIP 107171 / LMG 19424 / R1) (Ralstonia taiwanensis (strain LMG 19424)) protein is Ketol-acid reductoisomerase (NADP(+)).